A 331-amino-acid polypeptide reads, in one-letter code: ADP,ATP carrier protein 1, mitochondrial (331 aa).

3 Solcar repeats span residues K29 to M122, K134 to V226, and A238 to L320. 5 helical membrane passes run F31–L58, T99–F123, Y132–F152, F202–L223, and F237–I257. 2 residues coordinate ADP: R104 and K116. ADP is bound at residue R261. The important for transport activity stretch occupies residues R261–M266. The Nucleotide carrier signature motif motif lies at R261 to M266. The chain crosses the membrane as a helical span at residues A297–L317.

It belongs to the mitochondrial carrier (TC 2.A.29) family. As to quaternary structure, monomer.

The protein localises to the mitochondrion inner membrane. It carries out the reaction ADP(in) + ATP(out) = ADP(out) + ATP(in). With respect to regulation, the matrix-open state (m-state) is inhibited by the membrane-permeable bongkrekic acid (BKA). The cytoplasmic-open state (c-state) is inhibited by the membrane-impermeable toxic inhibitor carboxyatractyloside (CATR). In terms of biological role, ADP:ATP antiporter that mediates import of ADP into the mitochondrial matrix for ATP synthesis, and export of ATP out to fuel the cell. Cycles between the cytoplasmic-open state (c-state) and the matrix-open state (m-state): operates by the alternating access mechanism with a single substrate-binding site intermittently exposed to either the cytosolic (c-state) or matrix (m-state) side of the inner mitochondrial membrane. The protein is ADP,ATP carrier protein 1, mitochondrial (ANT-G1) of Triticum aestivum (Wheat).